Reading from the N-terminus, the 452-residue chain is UDP-N-acetylmuramoylalanine--D-glutamate ligase (452 aa).

Residue G119 to T125 coordinates ATP.

The protein belongs to the MurCDEF family.

It is found in the cytoplasm. The catalysed reaction is UDP-N-acetyl-alpha-D-muramoyl-L-alanine + D-glutamate + ATP = UDP-N-acetyl-alpha-D-muramoyl-L-alanyl-D-glutamate + ADP + phosphate + H(+). Its pathway is cell wall biogenesis; peptidoglycan biosynthesis. Cell wall formation. Catalyzes the addition of glutamate to the nucleotide precursor UDP-N-acetylmuramoyl-L-alanine (UMA). The polypeptide is UDP-N-acetylmuramoylalanine--D-glutamate ligase (murD) (Streptococcus pyogenes serotype M1).